We begin with the raw amino-acid sequence, 829 residues long: Leucine--tRNA ligase (829 aa).

The 'HIGH' region signature appears at 40–51 (PYPSGAGLHVGH). Residues 609–613 (KMSKS) carry the 'KMSKS' region motif. Residue K612 participates in ATP binding.

The protein belongs to the class-I aminoacyl-tRNA synthetase family.

It localises to the cytoplasm. It catalyses the reaction tRNA(Leu) + L-leucine + ATP = L-leucyl-tRNA(Leu) + AMP + diphosphate. The sequence is that of Leucine--tRNA ligase from Lactococcus lactis subsp. lactis (strain IL1403) (Streptococcus lactis).